The primary structure comprises 852 residues: Thrombospondin type-1 domain-containing protein 1 (852 aa).

Positions 1-24 (MKPMLKDFSNLLLVVLCDYVLGEA) are cleaved as a signal peptide. Residues 25–413 (EYLLLREPGH…QPQGPVKSNN (389 aa)) lie on the Extracellular side of the membrane. N-linked (GlcNAc...) asparagine glycosylation is found at Asn39, Asn53, Asn58, Asn69, Asn80, Asn135, and Asn304. Positions 340-393 (TETWGLWQPWSQCSATCGDGVRERRRVCLTSFPSSPVCPGMSLEASLCSLEECA) constitute a TSP type-1 domain. Disulfide bonds link Cys352–Cys387, Cys356–Cys392, and Cys367–Cys377. A helical membrane pass occupies residues 414-434 (IVTVTGISLCLFIIIATVLIT). Residues 435–852 (LWRRFGRPAK…STLSVEKLVI (418 aa)) lie on the Cytoplasmic side of the membrane. Disordered stretches follow at residues 444–517 (KCST…ESFQ) and 624–799 (LIRK…RKDK). Position 463 is a phosphoserine (Ser463). The segment covering 645–654 (ARNAHFRRTA) has biased composition (basic residues). The span at 655-669 (SFHEARQARPFRERS) shows a compositional bias: basic and acidic residues. Polar residues predominate over residues 670–685 (MSTLTPRQAPAYSSRT). Residues 686-696 (RTCEQAEDRFR) are compositionally biased toward basic and acidic residues. Polar residues-rich tracts occupy residues 766-778 (SHKSVSRKQSSPI) and 785-794 (QRVSSLSPSQ).

Part of a complex composed of THSD1, PTK2/FAK1, TLN1 and VCL. Interacts with TLN1.

It localises to the endosome membrane. The protein localises to the cell junction. Its subcellular location is the focal adhesion. The protein resides in the membrane. It is found in the secreted. Functionally, is a positive regulator of nascent focal adhesion assembly, involved in the modulation of endothelial cell attachment to the extracellular matrix. This is Thrombospondin type-1 domain-containing protein 1 (THSD1) from Homo sapiens (Human).